Consider the following 532-residue polypeptide: Berberine bridge enzyme-like 18 (532 aa).

An N-terminal signal peptide occupies residues 1-29 (MKFQSFFSSVLIFFTTSTLLLSIPHPVSA). 7 N-linked (GlcNAc...) asparagine glycosylation sites follow: Asn30, Asn33, Asn46, Asn59, Asn147, Asn169, and Asn262. Cys40 and Cys102 are oxidised to a cystine. The region spanning 80–254 (DVPKPVLILT…LSWKIGLINV (175 aa)) is the FAD-binding PCMH-type domain. A cross-link (6-(S-cysteinyl)-8alpha-(pros-histidyl)-FAD (His-Cys)) is located at residues 117–179 (HDYEGLSYVT…RTLAFPAGVC (63 aa)).

The protein belongs to the oxygen-dependent FAD-linked oxidoreductase family. It depends on FAD as a cofactor. In terms of processing, the FAD cofactor is bound via a bicovalent 6-S-cysteinyl, 8alpha-N1-histidyl FAD linkage.

It localises to the secreted. It is found in the cell wall. The sequence is that of Berberine bridge enzyme-like 18 from Arabidopsis thaliana (Mouse-ear cress).